The chain runs to 596 residues: Beta-fructofuranosidase, insoluble isoenzyme 6 (596 aa).

An N-terminal signal peptide occupies residues 1 to 25 (MALAGLPLSVFAIAVHFCLVFSSSS). Substrate contacts are provided by residues 49–52 (WQND), Gln-68, and Trp-76. The active site involves Asp-52. Asn-80 carries an N-linked (GlcNAc...) asparagine glycan. Substrate is bound by residues 113–114 (AS), 177–178 (RD), and Glu-232. Asn-335 is a glycosylation site (N-linked (GlcNAc...) asparagine). A disulfide bridge connects residues Cys-436 and Cys-482. Asn-556 carries an N-linked (GlcNAc...) asparagine glycan.

This sequence belongs to the glycosyl hydrolase 32 family. In terms of tissue distribution, expressed in roots. Weakly expressed in flowers.

Its subcellular location is the secreted. The protein localises to the extracellular space. It is found in the apoplast. It localises to the cell wall. The catalysed reaction is Hydrolysis of terminal non-reducing beta-D-fructofuranoside residues in beta-D-fructofuranosides.. This chain is Beta-fructofuranosidase, insoluble isoenzyme 6 (CIN6), found in Oryza sativa subsp. japonica (Rice).